Reading from the N-terminus, the 304-residue chain is Mitochondrial glycine transporter (304 aa).

Solcar repeat units follow at residues 25–114 (HPVI…LKQY), 121–205 (PTAL…TKNI), and 215–299 (LIPI…MMAK). The next 6 membrane-spanning stretches (helical) occupy residues 31-56 (FLCGSISGTCSTLLFQPLDLLKTRLQ), 89-115 (GMSPSIVRCVPGVGIYFGTLYSLKQYF), 127-152 (VMLGVGSRSVAGVCMSPITVIKTRYE), 180-203 (GLTATLLRDAPFSGIYLMFYNQTK), 219-245 (TNFSCGIFAGILASLVTQPADVIKTHM), and 274-292 (GGIPRALRRTLMAAMAWTV).

Belongs to the mitochondrial carrier (TC 2.A.29) family. SLC25A38 subfamily. As to expression, preferentially expressed in erythroid cells.

It is found in the mitochondrion inner membrane. It catalyses the reaction glycine(in) = glycine(out). Its function is as follows. Mitochondrial glycine transporter that imports glycine into the mitochondrial matrix. Plays an important role in providing glycine for the first enzymatic step in heme biosynthesis, the condensation of glycine with succinyl-CoA to produce 5-aminolevulinate (ALA) in the mitochondrial matrix. Required during erythropoiesis. Functionally, plays a role as pro-apoptotic protein that induces caspase-dependent apoptosis. This chain is Mitochondrial glycine transporter, found in Homo sapiens (Human).